Here is a 357-residue protein sequence, read N- to C-terminus: Peptide chain release factor 1 (357 aa).

The residue at position 234 (Gln-234) is an N5-methylglutamine.

The protein belongs to the prokaryotic/mitochondrial release factor family. In terms of processing, methylated by PrmC. Methylation increases the termination efficiency of RF1.

Its subcellular location is the cytoplasm. In terms of biological role, peptide chain release factor 1 directs the termination of translation in response to the peptide chain termination codons UAG and UAA. This is Peptide chain release factor 1 from Lactococcus lactis subsp. cremoris (strain SK11).